A 1100-amino-acid chain; its full sequence is Exportin-T (1100 aa).

Belongs to the exportin family. Interacts with CEX1, GSP1, GSP2, NSP1, NUP2 and UTP8.

The protein resides in the nucleus. It is found in the cytoplasm. Its function is as follows. tRNA nucleus export receptor which facilitates tRNA translocation across the nuclear pore complex. Preferentially interacts with tRNAs with mature 5'- and 3'-termini and does not distinguish between intron-containing and spliced tRNAs. In the nucleus binds to tRNA and to the Ran-GTPases GSP1 or GSP2 in their active GTP-bound form. Docking of this trimeric complex to the nuclear pore complex (NPC) is mediated through binding to nucleoporins. Upon transit of a nuclear export complex into the cytoplasm, disassembling of the complex and hydrolysis of Ran-GTP to Ran-GDP cause release of the tRNA from the export receptor. The directionality of nuclear export is thought to be conferred by an asymmetric distribution of the GTP- and GDP-bound forms of Ran between the cytoplasm and nucleus. The sequence is that of Exportin-T (LOS1) from Saccharomyces cerevisiae (strain ATCC 204508 / S288c) (Baker's yeast).